The primary structure comprises 366 residues: Flagellar P-ring protein (366 aa).

Residues 1-24 form the signal peptide; sequence MWPLLLAVALSTLLPLAMPGSAGA.

This sequence belongs to the FlgI family. As to quaternary structure, the basal body constitutes a major portion of the flagellar organelle and consists of four rings (L,P,S, and M) mounted on a central rod.

It localises to the periplasm. It is found in the bacterial flagellum basal body. Its function is as follows. Assembles around the rod to form the L-ring and probably protects the motor/basal body from shearing forces during rotation. This Nitratidesulfovibrio vulgaris (strain ATCC 29579 / DSM 644 / CCUG 34227 / NCIMB 8303 / VKM B-1760 / Hildenborough) (Desulfovibrio vulgaris) protein is Flagellar P-ring protein.